A 1134-amino-acid chain; its full sequence is Translation initiation factor IF-2 (1134 aa).

Disordered stretches follow at residues 55-465 (AQKS…HIIG) and 491-524 (LARP…QRQR). 5 stretches are compositionally biased toward polar residues: residues 56–65 (QKSSNSSSPP), 83–105 (SPPT…SSLK), 137–147 (PSISKNNSLKV), 208–234 (QIKQ…IQTN), and 251–264 (VQSQ…NNNL). 2 stretches are compositionally biased toward basic and acidic residues: residues 391–403 (KRGD…KKDG) and 438–450 (PDWD…EALR). 2 stretches are compositionally biased toward basic residues: residues 495–504 (GKPKASKKSG) and 511–524 (LRKR…QRQR). The tr-type G domain maps to 626–798 (RRPPVVTVMG…ILLVTEVEDL (173 aa)). Positions 635–642 (GHVDHGKT) are G1. 635–642 (GHVDHGKT) provides a ligand contact to GTP. A G2 region spans residues 660-664 (GITQH). Residues 685–688 (DTPG) form a G3 region. Residues 685 to 689 (DTPGH) and 739 to 742 (NKID) each bind GTP. The tract at residues 739-742 (NKID) is G4. The tract at residues 775-777 (SAI) is G5.

This sequence belongs to the TRAFAC class translation factor GTPase superfamily. Classic translation factor GTPase family. IF-2 subfamily.

The protein resides in the cytoplasm. In terms of biological role, one of the essential components for the initiation of protein synthesis. Protects formylmethionyl-tRNA from spontaneous hydrolysis and promotes its binding to the 30S ribosomal subunits. Also involved in the hydrolysis of GTP during the formation of the 70S ribosomal complex. The chain is Translation initiation factor IF-2 from Prochlorococcus marinus (strain SARG / CCMP1375 / SS120).